Here is a 161-residue protein sequence, read N- to C-terminus: Regulator of ribonuclease activity A (161 aa).

It belongs to the RraA family. In terms of assembly, homotrimer. Binds to both RNA-binding sites in the C-terminal region of Rne and to RhlB.

The protein resides in the cytoplasm. Its function is as follows. Globally modulates RNA abundance by binding to RNase E (Rne) and regulating its endonucleolytic activity. Can modulate Rne action in a substrate-dependent manner by altering the composition of the degradosome. Modulates RNA-binding and helicase activities of the degradosome. This chain is Regulator of ribonuclease activity A, found in Sodalis glossinidius (strain morsitans).